A 151-amino-acid chain; its full sequence is UPF0756 membrane protein Aflv_0503 (151 aa).

4 consecutive transmembrane segments (helical) span residues 4 to 24 (FIFL…SLII), 52 to 72 (LGVT…KIGF), 85 to 105 (WIAM…VALL), and 115 to 135 (LVLG…GPLI).

Belongs to the UPF0756 family.

The protein localises to the cell membrane. This chain is UPF0756 membrane protein Aflv_0503, found in Anoxybacillus flavithermus (strain DSM 21510 / WK1).